A 156-amino-acid polypeptide reads, in one-letter code: Transcription elongation factor GreA (156 aa).

Positions 1–32 form a coiled coil; sequence MKKVRLTREGYEKLKKELEDLKRKFMYEISER.

This sequence belongs to the GreA/GreB family.

In terms of biological role, necessary for efficient RNA polymerase transcription elongation past template-encoded arresting sites. The arresting sites in DNA have the property of trapping a certain fraction of elongating RNA polymerases that pass through, resulting in locked ternary complexes. Cleavage of the nascent transcript by cleavage factors such as GreA or GreB allows the resumption of elongation from the new 3'terminus. GreA releases sequences of 2 to 3 nucleotides. This chain is Transcription elongation factor GreA, found in Thermotoga maritima (strain ATCC 43589 / DSM 3109 / JCM 10099 / NBRC 100826 / MSB8).